The chain runs to 560 residues: Synaptotagmin-5 (560 aa).

Residues 2–22 form a helical membrane-spanning segment; that stretch reads GFIVGVVIGLLVGIAIIIGFV. The SMP-LTD domain maps to 67-249; the sequence is ERQKLTWLNH…WPVRKVIPII (183 aa). Positions 227-523 are phospholipid binding; sequence EETIRDAVED…YIGRCILTLT (297 aa). C2 domains are found at residues 243-364 and 417-535; these read RKVI…DVWL and TTDE…KDWY. Ca(2+) is bound by residues Asp-278, Asp-284, Asp-334, Glu-336, Asp-451, Asp-457, Asp-506, Asp-508, and Asp-513.

Belongs to the synaptotagmin family. Ca(2+) is required as a cofactor.

It localises to the membrane. May be involved in membrane trafficking. This Arabidopsis thaliana (Mouse-ear cress) protein is Synaptotagmin-5 (SYT5).